The following is a 470-amino-acid chain: Syncoilin (470 aa).

A disordered region spans residues 1–43 (MASPEPLRGGDGARASREPHTEASFPLQESESPKEAKTFNPEA). The interval 1-148 (MASPEPLRGG…TEGSLPAQPI (148 aa)) is head. Serine 32 is subject to Phosphoserine. In terms of domain architecture, IF rod spans 157 to 452 (SVEDLERLEA…AMLPKSLEQA (296 aa)). The interval 158–192 (VEDLERLEARFQQCVQAVSQLEEERDQLIHELVLL) is coil 1A. The tract at residues 193–219 (REPALQEVQQVHQDILAAYKLHAQAEL) is linker 1. A coil 1b region spans residues 220–297 (ERDGLREEIR…KEQLQQQLEA (78 aa)). Residues 298-337 (PPTQSDGHFLQESRRLSTQFENLMAESRQGLEEEYEPQLL) form a linker 2 region. Serine 314 carries the post-translational modification Phosphoserine. A coil 2 region spans residues 338–445 (RLLERKEAGT…EELSTYKAML (108 aa)). The tract at residues 446–470 (PKSLEQADAPTSQAGGVEAQSPGTV) is disordered. The segment at 446–470 (PKSLEQADAPTSQAGGVEAQSPGTV) is tail.

Belongs to the intermediate filament family. In terms of assembly, may link the dystrophin-associated glycoprotein complex (DAPC) to intracellular desmin (DES) filaments. Interacts with DES and DTNA. As to expression, detected strongly in skeletal muscle and heart and weakly in lung (at protein level). Highly expressed in skeletal muscle and lung and weakly in lung and testis.

It localises to the cytoplasm. It is found in the perinuclear region. Atypical type III intermediate filament (IF) protein that may play a supportive role in the efficient coupling of mechanical stress between the myofibril and fiber exterior. May facilitate lateral force transmission during skeletal muscle contraction. Does not form homofilaments nor heterofilaments with other IF proteins. The protein is Syncoilin (Sync) of Mus musculus (Mouse).